The primary structure comprises 293 residues: Tumor necrosis factor receptor superfamily member 13B (293 aa).

Topologically, residues 1 to 165 (MSGLGRSRRG…SADQVALVYS (165 aa)) are extracellular. TNFR-Cys repeat units lie at residues 33 to 67 (SCPEEQYWDPLLGTCMSCKTICNHQSQRTCAAFCR) and 70 to 104 (SCRKEQGKFYDHLLRDCISCASICGQHPKQCAYFC). Cystine bridges form between cysteine 34-cysteine 47, cysteine 50-cysteine 62, cysteine 54-cysteine 66, cysteine 71-cysteine 86, cysteine 89-cysteine 100, and cysteine 93-cysteine 104. Positions 115 to 146 (PPELRRQRSGEVENNSDNSGRYQGLEHRGSEA) are disordered. The span at 126–135 (VENNSDNSGR) shows a compositional bias: polar residues. Asparagine 128 carries N-linked (GlcNAc...) asparagine glycosylation. The chain crosses the membrane as a helical; Signal-anchor for type III membrane protein span at residues 166-186 (TLGLCLCAVLCCFLVAVACFL). Over 187 to 293 (KKRGDPCSCQ…VPAQEGGPGA (107 aa)) the chain is Cytoplasmic. The disordered stretch occupies residues 192 to 226 (PCSCQPRSRPRQSPAKSSQDHAMEAGSPVSTSPEP).

Binds TRAF2, TRAF5 and TRAF6. Binds the NH2-terminal domain of CAMLG with its C-terminus. In terms of tissue distribution, highly expressed in spleen, thymus, small intestine and peripheral blood leukocytes. Expressed in resting B-cells and activated T-cells, but not in resting T-cells.

The protein resides in the membrane. Receptor for TNFSF13/APRIL and TNFSF13B/TALL1/BAFF/BLYS that binds both ligands with similar high affinity. Mediates calcineurin-dependent activation of NF-AT, as well as activation of NF-kappa-B and AP-1. Involved in the stimulation of B- and T-cell function and the regulation of humoral immunity. This Homo sapiens (Human) protein is Tumor necrosis factor receptor superfamily member 13B (TNFRSF13B).